We begin with the raw amino-acid sequence, 525 residues long: GMP synthase [glutamine-hydrolyzing] (525 aa).

The 199-residue stretch at 9–207 folds into the Glutamine amidotransferase type-1 domain; that stretch reads RILILDFGSQ…VKEICHCEAL (199 aa). The Nucleophile role is filled by Cys-86. Residues His-181 and Glu-183 contribute to the active site. The 193-residue stretch at 208–400 folds into the GMPS ATP-PPase domain; that stretch reads WTPATIIEDA…LGLPYNMLYR (193 aa). Residue 235–241 participates in ATP binding; it reads SGGVDSS.

In terms of assembly, homodimer.

The catalysed reaction is XMP + L-glutamine + ATP + H2O = GMP + L-glutamate + AMP + diphosphate + 2 H(+). The protein operates within purine metabolism; GMP biosynthesis; GMP from XMP (L-Gln route): step 1/1. Catalyzes the synthesis of GMP from XMP. In Tolumonas auensis (strain DSM 9187 / NBRC 110442 / TA 4), this protein is GMP synthase [glutamine-hydrolyzing].